The sequence spans 300 residues: uncharacterized protein (300 aa).

10 helical membrane passes run 4-24 (IIII…WIAM), 31-51 (IPPF…LIIL), 68-88 (FQIF…LYGG), 95-115 (ISSI…HFYL), 120-140 (NFIQ…VLLI), 146-166 (CFFQ…HAVI), 177-197 (VSVI…LSII), 214-234 (ILAV…SYFY), 242-262 (FYAS…EIYI), and 272-292 (LWFI…INFF). 2 EamA domains span residues 15-139 (ITWG…FVLL) and 161-287 (LSHA…LTLI).

The protein belongs to the EamA transporter family.

It localises to the cell membrane. This is an uncharacterized protein from Buchnera aphidicola subsp. Schizaphis graminum (strain Sg).